A 163-amino-acid chain; its full sequence is uncharacterized protein (163 aa).

A disordered region spans residues proline 128–valine 163. Residues lysine 129–valine 163 show a composition bias toward basic residues.

This is an uncharacterized protein from Sulfurisphaera tokodaii (strain DSM 16993 / JCM 10545 / NBRC 100140 / 7) (Sulfolobus tokodaii).